Reading from the N-terminus, the 474-residue chain is Hepatocyte nuclear factor 4-alpha (474 aa).

A DNA-binding region (nuclear receptor) is located at residues 57–132 (SALCAICGDR…AGMKKEAVQN (76 aa)). 2 consecutive NR C4-type zinc fingers follow at residues 60 to 80 (CAICGDRATGKHYGASSCDGC) and 96 to 120 (CRFSRQCVVDKDKRNQCRYCRLKKC). Ser142 and Ser143 each carry phosphoserine; by PKA. Tyr144 is subject to Phosphotyrosine. Positions 147–377 (SSLPSINALL…NLLQEMLLGG (231 aa)) constitute an NR LBD domain. Thr166 carries the phosphothreonine modification. The residue at position 167 (Ser167) is a Phosphoserine. Glycyl lysine isopeptide (Lys-Gly) (interchain with G-Cter in ubiquitin) cross-links involve residues Lys234 and Lys307. Position 313 is a phosphoserine; by AMPK (Ser313). The 9aaTAD motif lies at 368–376 (NLLQEMLLG). The tract at residues 413-450 (SNGQMCEWPRPRGQAATPETPQPSPPSGSGSESYKLLP) is disordered. A phosphothreonine mark is found at Thr429 and Thr432. Ser436 is subject to Phosphoserine. Lys458 is modified (N6-acetyllysine).

This sequence belongs to the nuclear hormone receptor family. NR2 subfamily. In terms of assembly, homodimerization is required for HNF4-alpha to bind to its recognition site. Interacts with CLOCK, BMAL1, CRY1, CRY2, PER1 and PER2. Interacts with NR0B2/SHP; the resulting heterodimer is transcriptionally inactive. Interacts with DDX3X; this interaction disrupts the interaction between HNF4 and NR0B2 that forms inactive heterodimers and enhances the formation of active HNF4 homodimers. Phosphorylation at Ser-313 by AMPK reduces the ability to form homodimers and bind DNA. Phosphorylated in the recognition sequence R-R-S-S near the DNA-binding domain; phosphorylation results in decrease in DNA-binding activity. Phosphorylation of HNF4 depends on the diet and is decreased by a carbohydrate-rich diet and is increased by fasting. Post-translationally, the N-terminus is blocked. In terms of processing, acetylation at Lys-458 lowers transcriptional activation by about two-fold. In terms of tissue distribution, liver, kidney and intestine.

It is found in the nucleus. In terms of biological role, transcriptional regulator which controls the expression of hepatic genes during the transition of endodermal cells to hepatic progenitor cells, facilitating the recruitment of RNA pol II to the promoters of target genes. Activates the transcription of CYP2C38. Represses the CLOCK-BMAL1 transcriptional activity and is essential for circadian rhythm maintenance and period regulation in the liver and colon cells. This chain is Hepatocyte nuclear factor 4-alpha (Hnf4a), found in Rattus norvegicus (Rat).